A 198-amino-acid polypeptide reads, in one-letter code: SOSS complex subunit B2 (198 aa).

Positions I26–Y89 form a DNA-binding region, OB. The tract at residues E114–R198 is disordered. Composition is skewed to polar residues over residues S136–P151 and L173–N188.

It belongs to the SOSS-B family. SOSS-B2 subfamily. In terms of assembly, component of the SOSS complex, composed of SOSS-B (SOSS-B1/NABP2 or SOSS-B2/NABP1), SOSS-A/INTS3 and SOSS-C/INIP. SOSS complexes containing SOSS-B1/NABP2 are more abundant than complexes containing SOSS-B2/NABP1. In terms of tissue distribution, ubiquitous with high expression in the thymus.

It localises to the nucleus. Functionally, component of the SOSS complex, a multiprotein complex that functions downstream of the MRN complex to promote DNA repair and G2/M checkpoint. In the SOSS complex, acts as a sensor of single-stranded DNA that binds to single-stranded DNA, in particular to polypyrimidines. The SOSS complex associates with DNA lesions and influences diverse endpoints in the cellular DNA damage response including cell-cycle checkpoint activation, recombinational repair and maintenance of genomic stability. Required for efficient homologous recombination-dependent repair of double-strand breaks (DSBs) and ATM-dependent signaling pathways. This chain is SOSS complex subunit B2 (Nabp1), found in Mus musculus (Mouse).